We begin with the raw amino-acid sequence, 282 residues long: HTH-type transcriptional activator RhaR (282 aa).

The 99-residue stretch at 179-277 (DKLITALANS…GMTPSQWRHL (99 aa)) folds into the HTH araC/xylS-type domain. 2 DNA-binding regions (H-T-H motif) span residues 196–217 (DAFC…RAQT) and 244–267 (ISEI…TRET).

As to quaternary structure, binds DNA as a dimer.

Its subcellular location is the cytoplasm. Activates expression of the rhaSR operon in response to L-rhamnose. This is HTH-type transcriptional activator RhaR from Salmonella arizonae (strain ATCC BAA-731 / CDC346-86 / RSK2980).